The chain runs to 255 residues: 5'-nucleotidase SurE (255 aa).

A divalent metal cation-binding residues include aspartate 8, aspartate 9, serine 40, and asparagine 92.

It belongs to the SurE nucleotidase family. Requires a divalent metal cation as cofactor.

It localises to the cytoplasm. The catalysed reaction is a ribonucleoside 5'-phosphate + H2O = a ribonucleoside + phosphate. Functionally, nucleotidase that shows phosphatase activity on nucleoside 5'-monophosphates. This is 5'-nucleotidase SurE from Brucella abortus (strain S19).